Reading from the N-terminus, the 98-residue chain is RING finger protein Z (98 aa).

Over residues 1-10 (MGNTKTKDRQ) the composition is skewed to basic and acidic residues. The segment at 1 to 26 (MGNTKTKDRQYQSNSSQPTNTSAPVL) is disordered. Gly-2 carries the N-myristoyl glycine; by host lipid modification. Residues 11-23 (YQSNSSQPTNTSA) are compositionally biased toward polar residues. The RING-type; atypical zinc-finger motif lies at 41 to 77 (CRCCWFADTNLVNCSNHYLCLKCLNTMLRRSNLCDIC). The PTAP/PSAP motif motif lies at 91-94 (PSAP).

Belongs to the arenaviridae Z protein family. In terms of assembly, interacts with protein NP; this interaction probably directs the encapsidated genome to budding sites. Interacts (via RING domain) with polymerase L; this interaction inhibits viral transcription and replication, Z partially blocks the product exit tunnel for the releasing nascent RNA product. Interacts with the glycoprotein complex; this interaction plays a role in virion budding. Interacts with host eIF4E; this interaction results in eIF4E reduced affinity for its substrate, the 5'-m7 G cap structure. Interacts (via late-budding domain) with host TSG101; this interaction is essential for budding and release of viral particles. Interacts with host RPLP0; this interaction may serve to load ribosome-like particles inside the virion. Interacts with host PML; this interaction induces PML bodies redistribution in the cytoplasm upon viral infection. Post-translationally, myristoylation is required for the role of RING finger protein Z in assembly and budding.

Its subcellular location is the virion. The protein localises to the host cytoplasm. It is found in the host perinuclear region. It localises to the host cell membrane. Functionally, plays a crucial role in virion assembly and budding. Expressed late in the virus life cycle, it acts as an inhibitor of viral transcription and RNA synthesis by interacting with the viral polymerase L. Presumably recruits the NP encapsidated genome to cellular membranes at budding sites via direct interaction with NP. Plays critical roles in the final steps of viral release by interacting with host TSG101, a member of the vacuolar protein-sorting pathway and using other cellular host proteins involved in vesicle formation pathway. The budding of the virus progeny occurs after association of protein Z with the viral glycoprotein complex SSP-GP1-GP2 at the cell periphery, step that requires myristoylation of protein Z. Also selectively represses protein production by associating with host eIF4E. In cell-based minigenome assay, has an inhibitory effect on the ribonucleoprotein machinery (vRNP), which is responsible for the replication and transcription of the viral genome. The polypeptide is RING finger protein Z (Chapare mammarenavirus (isolate Human/Bolivia/810419/2003)).